The primary structure comprises 98 residues: NADH-ubiquinone oxidoreductase chain 4L (98 aa).

3 helical membrane-spanning segments follow: residues 2-22 (PSIS…MLIF), 29-49 (SLLC…LTIL), and 61-81 (ILLL…LVTV).

The protein belongs to the complex I subunit 4L family. In terms of assembly, core subunit of respiratory chain NADH dehydrogenase (Complex I) which is composed of 45 different subunits.

Its subcellular location is the mitochondrion inner membrane. The catalysed reaction is a ubiquinone + NADH + 5 H(+)(in) = a ubiquinol + NAD(+) + 4 H(+)(out). Core subunit of the mitochondrial membrane respiratory chain NADH dehydrogenase (Complex I) which catalyzes electron transfer from NADH through the respiratory chain, using ubiquinone as an electron acceptor. Part of the enzyme membrane arm which is embedded in the lipid bilayer and involved in proton translocation. The sequence is that of NADH-ubiquinone oxidoreductase chain 4L (MT-ND4L) from Hapalemur aureus (Golden bamboo lemur).